The following is a 615-amino-acid chain: MPIQVLPPQLANQIAAGEVVERPASVVKELVENSLDAGATRIDIDIERGGAKLIRIRDNGCGIKKDELALALARHATSKIASLDDLEAIISLGFRGEALASISSVSRLTLTSRTAEQQEAWQAYAEGRDMDVTVKPAAHPVGTTLEVLDLFYNTPARRKFLRTEKTEFNHIDEIIRRIALARFDVTINLSHNGKIVRQYRAVPEGGQKERRLGAICGTAFLEQALAIEWQHGDLTLRGWVADPNHTTPALAEIQYCYVNGRMMRDRLINHAIRQACEDKLGADQQPAFVLYLEIDPHQVDVNVHPAKHEVRFHQSRLVHDFIYQGVLSVLQQQLETPLPLDDEPQPAPRPIPENRVAAGRNHFAEPAVREPVAPRYTPAPASGSRPAAPWPNAQPGYQKQQGEVYRQLLQTPAPMQKPKAPEPQEPALAANSQSFGRVLTIVHSDCALLERDGNISLLALPVAERWLRQVQLTPGEAPVCAQPLLIPLRLKVSGEEKSALEKAQSALAELGIDFQSDAQHVTIRAVPLPLRQQNLQILIPELIGYLAKQSVFEPGNIAQWIARNLMSENAQWSMAQAITLLADVERLCPQLVKTPPGGLLQSVDLHPAIKALKDE.

Positions 363 to 397 are disordered; sequence FAEPAVREPVAPRYTPAPASGSRPAAPWPNAQPGY. Residues 378-391 are compositionally biased toward low complexity; the sequence is PAPASGSRPAAPWP.

This sequence belongs to the DNA mismatch repair MutL/HexB family.

This protein is involved in the repair of mismatches in DNA. It is required for dam-dependent methyl-directed DNA mismatch repair. May act as a 'molecular matchmaker', a protein that promotes the formation of a stable complex between two or more DNA-binding proteins in an ATP-dependent manner without itself being part of a final effector complex. The chain is DNA mismatch repair protein MutL from Escherichia coli O157:H7.